We begin with the raw amino-acid sequence, 209 residues long: N-(5'-phosphoribosyl)anthranilate isomerase (209 aa).

It belongs to the TrpF family.

It catalyses the reaction N-(5-phospho-beta-D-ribosyl)anthranilate = 1-(2-carboxyphenylamino)-1-deoxy-D-ribulose 5-phosphate. Its pathway is amino-acid biosynthesis; L-tryptophan biosynthesis; L-tryptophan from chorismate: step 3/5. This chain is N-(5'-phosphoribosyl)anthranilate isomerase, found in Erythrobacter litoralis (strain HTCC2594).